An 88-amino-acid polypeptide reads, in one-letter code: uncharacterized protein (88 aa).

The first 22 residues, 1 to 22, serve as a signal peptide directing secretion; that stretch reads MLKASILFITISLTLMLENSYG. 3 disulfide bridges follow: C59-C73, C66-C77, and C72-C82.

The protein resides in the secreted. This is an uncharacterized protein from Schistosoma japonicum (Blood fluke).